The primary structure comprises 412 residues: Phosphoglycerate kinase, plasmid (412 aa).

Substrate contacts are provided by residues 39-41 (DLN), R55, 78-81 (HLGR), R133, and R166. ATP is bound by residues K217, E339, and 365–368 (GGDT).

The protein belongs to the phosphoglycerate kinase family. As to quaternary structure, monomer.

The protein localises to the cytoplasm. It carries out the reaction (2R)-3-phosphoglycerate + ATP = (2R)-3-phospho-glyceroyl phosphate + ADP. It participates in carbohydrate biosynthesis; Calvin cycle. This chain is Phosphoglycerate kinase, plasmid (cbbKP), found in Cupriavidus necator (strain ATCC 17699 / DSM 428 / KCTC 22496 / NCIMB 10442 / H16 / Stanier 337) (Ralstonia eutropha).